The sequence spans 872 residues: Armadillo repeat-containing protein 3 (872 aa).

ARM repeat units lie at residues 15 to 54 (DVFD…KFAL), 57 to 96 (EENK…ILAS), 98 to 138 (NDVK…NMSA), 140 to 179 (YTSK…NLVQ), 181 to 220 (FQCR…VIAN), 222 to 262 (KESR…NCLE), 264 to 304 (MDTM…KAAY), 306 to 345 (PENR…AMCE), 346 to 385 (NSGS…NLTT), 388 to 427 (PANA…NMAM), 429 to 468 (EPLR…ATAC), and 470 to 509 (VEAR…VCAG). Residues Cys-507 and Cys-518 are each lipidated (S-palmitoyl cysteine). Positions 610-693 (VSPPSSMEDK…SKGKKEEEKV (84 aa)) are disordered. The segment covering 626-635 (RSISSSSSLR) has biased composition (low complexity). Residues 636–646 (RSSKEKNKKNS) show a composition bias toward basic residues. Over residues 675–693 (ATKEKGWRKSKGKKEEEKV) the composition is skewed to basic and acidic residues.

In terms of assembly, homodimer. Interacts with PIK3C3, PIK3R4 and BECN1. Interacts (via ARM domains) with ATG14. Palmitoylation is important for its function in autophagy. In terms of tissue distribution, expressed in skeletal muscle, brain, lung, kidney, prostate and testis. Mainly expressed in skeletal muscle, liver, spleen and thymus. As to expression, expressed only in the testis among normal tissues but is expressed frequently in various cancer tissues and, particularly, in pancreatic, lung and endometrial cancers.

In terms of biological role, essential for male fertility and sperm motility. During spermatogenesis, promotes the autophagic degradation of excessive ribosomes, providing energy resources for mitochondria and thus ensuring sperm flagellar motility. This Homo sapiens (Human) protein is Armadillo repeat-containing protein 3 (ARMC3).